We begin with the raw amino-acid sequence, 214 residues long: Thiamine-phosphate synthase (214 aa).

Residues 38 to 42 (QLREK) and Asn70 contribute to the 4-amino-2-methyl-5-(diphosphooxymethyl)pyrimidine site. Mg(2+)-binding residues include Asp71 and Asp90. Residues Ser109 and Lys138 each coordinate 4-amino-2-methyl-5-(diphosphooxymethyl)pyrimidine. Gly165 lines the 2-[(2R,5Z)-2-carboxy-4-methylthiazol-5(2H)-ylidene]ethyl phosphate pocket.

The protein belongs to the thiamine-phosphate synthase family. Mg(2+) serves as cofactor.

The catalysed reaction is 2-[(2R,5Z)-2-carboxy-4-methylthiazol-5(2H)-ylidene]ethyl phosphate + 4-amino-2-methyl-5-(diphosphooxymethyl)pyrimidine + 2 H(+) = thiamine phosphate + CO2 + diphosphate. The enzyme catalyses 2-(2-carboxy-4-methylthiazol-5-yl)ethyl phosphate + 4-amino-2-methyl-5-(diphosphooxymethyl)pyrimidine + 2 H(+) = thiamine phosphate + CO2 + diphosphate. It carries out the reaction 4-methyl-5-(2-phosphooxyethyl)-thiazole + 4-amino-2-methyl-5-(diphosphooxymethyl)pyrimidine + H(+) = thiamine phosphate + diphosphate. It functions in the pathway cofactor biosynthesis; thiamine diphosphate biosynthesis; thiamine phosphate from 4-amino-2-methyl-5-diphosphomethylpyrimidine and 4-methyl-5-(2-phosphoethyl)-thiazole: step 1/1. Functionally, condenses 4-methyl-5-(beta-hydroxyethyl)thiazole monophosphate (THZ-P) and 2-methyl-4-amino-5-hydroxymethyl pyrimidine pyrophosphate (HMP-PP) to form thiamine monophosphate (TMP). This is Thiamine-phosphate synthase from Caldanaerobacter subterraneus subsp. tengcongensis (strain DSM 15242 / JCM 11007 / NBRC 100824 / MB4) (Thermoanaerobacter tengcongensis).